Reading from the N-terminus, the 656-residue chain is Exoribonuclease 2 (656 aa).

In terms of domain architecture, RNB spans 190 to 518 (RSDLTKTPFF…LNHRLIKSVL (329 aa)). The 86-residue stretch at 564-649 (KWRYKAEIFD…ESGQLIGKLA (86 aa)) folds into the S1 motif domain.

The protein belongs to the RNR ribonuclease family. RNase II subfamily.

The protein localises to the cytoplasm. The enzyme catalyses Exonucleolytic cleavage in the 3'- to 5'-direction to yield nucleoside 5'-phosphates.. Involved in mRNA degradation. Hydrolyzes single-stranded polyribonucleotides processively in the 3' to 5' direction. This is Exoribonuclease 2 from Psychromonas ingrahamii (strain DSM 17664 / CCUG 51855 / 37).